A 430-amino-acid chain; its full sequence is Long-chain specific acyl-CoA dehydrogenase, mitochondrial (430 aa).

Residues 1–30 (MAARLLLRSLRVLSARSATLPPPSARCSHS) constitute a mitochondrion transit peptide. N6-acetyllysine is present on Lys-42. Residues Ser-54 and Ser-55 each carry the phosphoserine modification. N6-acetyllysine; alternate is present on residues Lys-66 and Lys-81. N6-succinyllysine; alternate occurs at positions 66 and 81. Residues Lys-92 and Lys-95 each carry the N6-acetyllysine modification. Lys-165 carries the N6-succinyllysine modification. Position 170-179 (170-179 (IAMTEPGAGS)) interacts with FAD. Ser-179 contacts substrate. The residue at position 191 (Ser-191) is a Phosphoserine. Residue 203–205 (FIT) participates in FAD binding. 227–228 (AH) is a substrate binding site. Lys-240 carries the N6-succinyllysine modification. Lys-254 and Lys-279 each carry N6-acetyllysine; alternate. Lys-254 and Lys-279 each carry N6-succinyllysine; alternate. Substrate-binding positions include Tyr-282 and 289 to 292 (PQER). The active-site Proton acceptor is Glu-291. Arg-317 contributes to the FAD binding site. The residue at position 318 (Lys-318) is an N6-acetyllysine. Residue Lys-322 is modified to N6-acetyllysine; alternate. Lys-322 is subject to N6-succinyllysine; alternate. Position 328 (Gln-328) interacts with FAD. The residue at position 358 (Lys-358) is an N6-acetyllysine. Ser-362 bears the Phosphoserine mark. 385–389 (QLHGG) is an FAD binding site. 412–413 (GG) contacts substrate. 414–416 (TNE) contacts FAD.

It belongs to the acyl-CoA dehydrogenase family. In terms of assembly, homotetramer. It depends on FAD as a cofactor. Post-translationally, acetylation at Lys-318 and Lys-322 in proximity of the cofactor-binding sites strongly reduces catalytic activity. These sites are deacetylated by SIRT3.

It localises to the mitochondrion matrix. It catalyses the reaction a long-chain 2,3-saturated fatty acyl-CoA + oxidized [electron-transfer flavoprotein] + H(+) = a long-chain (2E)-enoyl-CoA + reduced [electron-transfer flavoprotein]. The catalysed reaction is octanoyl-CoA + oxidized [electron-transfer flavoprotein] + H(+) = (2E)-octenoyl-CoA + reduced [electron-transfer flavoprotein]. It carries out the reaction decanoyl-CoA + oxidized [electron-transfer flavoprotein] + H(+) = (2E)-decenoyl-CoA + reduced [electron-transfer flavoprotein]. The enzyme catalyses dodecanoyl-CoA + oxidized [electron-transfer flavoprotein] + H(+) = (2E)-dodecenoyl-CoA + reduced [electron-transfer flavoprotein]. It catalyses the reaction tetradecanoyl-CoA + oxidized [electron-transfer flavoprotein] + H(+) = (2E)-tetradecenoyl-CoA + reduced [electron-transfer flavoprotein]. The catalysed reaction is oxidized [electron-transfer flavoprotein] + hexadecanoyl-CoA + H(+) = (2E)-hexadecenoyl-CoA + reduced [electron-transfer flavoprotein]. It carries out the reaction octadecanoyl-CoA + oxidized [electron-transfer flavoprotein] + H(+) = (2E)-octadecenoyl-CoA + reduced [electron-transfer flavoprotein]. The enzyme catalyses (5E)-tetradecenoyl-CoA + oxidized [electron-transfer flavoprotein] + H(+) = (2E,5E)-tetradecadienoyl-CoA + reduced [electron-transfer flavoprotein]. It catalyses the reaction (5Z)-tetradecenoyl-CoA + oxidized [electron-transfer flavoprotein] + H(+) = (2E,5Z)-tetradecadienoyl-CoA + reduced [electron-transfer flavoprotein]. The catalysed reaction is oxidized [electron-transfer flavoprotein] + (9Z)-octadecenoyl-CoA + H(+) = (2E,9Z)-octadecadienoyl-CoA + reduced [electron-transfer flavoprotein]. It carries out the reaction hexanoyl-CoA + oxidized [electron-transfer flavoprotein] + H(+) = (2E)-hexenoyl-CoA + reduced [electron-transfer flavoprotein]. The enzyme catalyses eicosanoyl-CoA + oxidized [electron-transfer flavoprotein] + H(+) = (2E)-eicosenoyl-CoA + reduced [electron-transfer flavoprotein]. It catalyses the reaction docosanoyl-CoA + oxidized [electron-transfer flavoprotein] + H(+) = (2E)-docosenoyl-CoA + reduced [electron-transfer flavoprotein]. The catalysed reaction is tetracosanoyl-CoA + oxidized [electron-transfer flavoprotein] + H(+) = (2E)-tetracosenoyl-CoA + reduced [electron-transfer flavoprotein]. It functions in the pathway lipid metabolism; mitochondrial fatty acid beta-oxidation. Inhibited by crotonyl-CoA, 2-octenoyl-CoA and 2-hexadecenoyl-CoA. In terms of biological role, long-chain specific acyl-CoA dehydrogenase is one of the acyl-CoA dehydrogenases that catalyze the first step of mitochondrial fatty acid beta-oxidation, an aerobic process breaking down fatty acids into acetyl-CoA and allowing the production of energy from fats. The first step of fatty acid beta-oxidation consists in the removal of one hydrogen from C-2 and C-3 of the straight-chain fatty acyl-CoA thioester, resulting in the formation of trans-2-enoyl-CoA. Among the different mitochondrial acyl-CoA dehydrogenases, long-chain specific acyl-CoA dehydrogenase can act on saturated and unsaturated acyl-CoAs with 6 to 24 carbons with a preference for 8 to 18 carbons long primary chains. This Rattus norvegicus (Rat) protein is Long-chain specific acyl-CoA dehydrogenase, mitochondrial.